Reading from the N-terminus, the 355-residue chain is Biotin synthase (355 aa).

The 225-residue stretch at 51–275 folds into the Radical SAM core domain; the sequence is NTVKVNYLVN…VCPDKEIRIA (225 aa). C66, C70, and C73 together coordinate [4Fe-4S] cluster. Residues C110, C143, C203, and R273 each coordinate [2Fe-2S] cluster.

The protein belongs to the radical SAM superfamily. Biotin synthase family. As to quaternary structure, homodimer. [4Fe-4S] cluster serves as cofactor. [2Fe-2S] cluster is required as a cofactor.

The catalysed reaction is (4R,5S)-dethiobiotin + (sulfur carrier)-SH + 2 reduced [2Fe-2S]-[ferredoxin] + 2 S-adenosyl-L-methionine = (sulfur carrier)-H + biotin + 2 5'-deoxyadenosine + 2 L-methionine + 2 oxidized [2Fe-2S]-[ferredoxin]. It functions in the pathway cofactor biosynthesis; biotin biosynthesis; biotin from 7,8-diaminononanoate: step 2/2. Catalyzes the conversion of dethiobiotin (DTB) to biotin by the insertion of a sulfur atom into dethiobiotin via a radical-based mechanism. This chain is Biotin synthase, found in Saccharopolyspora erythraea (strain ATCC 11635 / DSM 40517 / JCM 4748 / NBRC 13426 / NCIMB 8594 / NRRL 2338).